The sequence spans 342 residues: L-threonine 3-dehydrogenase (342 aa).

Position 38 (cysteine 38) interacts with Zn(2+). Active-site charge relay system residues include threonine 40 and histidine 43. The Zn(2+) site is built by histidine 63, glutamate 64, cysteine 93, cysteine 96, cysteine 99, and cysteine 107. Residues isoleucine 175, aspartate 195, arginine 200, 262–264 (LGI), and 286–287 (IY) each bind NAD(+).

This sequence belongs to the zinc-containing alcohol dehydrogenase family. As to quaternary structure, homotetramer. The cofactor is Zn(2+).

The protein resides in the cytoplasm. The catalysed reaction is L-threonine + NAD(+) = (2S)-2-amino-3-oxobutanoate + NADH + H(+). It functions in the pathway amino-acid degradation; L-threonine degradation via oxydo-reductase pathway; glycine from L-threonine: step 1/2. In terms of biological role, catalyzes the NAD(+)-dependent oxidation of L-threonine to 2-amino-3-ketobutyrate. The polypeptide is L-threonine 3-dehydrogenase (Burkholderia lata (strain ATCC 17760 / DSM 23089 / LMG 22485 / NCIMB 9086 / R18194 / 383)).